A 304-amino-acid chain; its full sequence is Phosphonates import ATP-binding protein PhnC 1 (304 aa).

The ABC transporter domain maps to 4 to 240 (VSLQNVTKLF…VIDDLYYAGS (237 aa)). Position 37–44 (37–44 (GPSGAGKS)) interacts with ATP. The tract at residues 240 to 304 (SESTPVSHGD…TETDTGEAQL (65 aa)) is disordered. A compositionally biased stretch (polar residues) spans 263 to 272 (TSVSSDMETT). Residues 289–304 (TDTETDTETDTGEAQL) show a composition bias toward acidic residues.

It belongs to the ABC transporter superfamily. Phosphonates importer (TC 3.A.1.9.1) family. As to quaternary structure, the complex is composed of two ATP-binding proteins (PhnC), two transmembrane proteins (PhnE) and a solute-binding protein (PhnD).

It localises to the cell membrane. It catalyses the reaction phosphonate(out) + ATP + H2O = phosphonate(in) + ADP + phosphate + H(+). In terms of biological role, part of the ABC transporter complex PhnCDE involved in phosphonates import. Responsible for energy coupling to the transport system. The polypeptide is Phosphonates import ATP-binding protein PhnC 1 (Haloquadratum walsbyi (strain DSM 16790 / HBSQ001)).